We begin with the raw amino-acid sequence, 266 residues long: Hemin import ATP-binding protein HmuV (266 aa).

Residues 12-248 (LEASHLHYHV…ETLTQWYQAD (237 aa)) form the ABC transporter domain. 44–51 (GPNGAGKS) lines the ATP pocket.

Belongs to the ABC transporter superfamily. Heme (hemin) importer (TC 3.A.1.14.5) family. As to quaternary structure, the complex is composed of two ATP-binding proteins (HmuV), two transmembrane proteins (HmuU) and a solute-binding protein (HmuT).

It localises to the cell inner membrane. Functionally, part of the ABC transporter complex HmuTUV involved in hemin import. Responsible for energy coupling to the transport system. The polypeptide is Hemin import ATP-binding protein HmuV (Yersinia pestis bv. Antiqua (strain Antiqua)).